The chain runs to 200 residues: Segregation and condensation protein B (200 aa).

It belongs to the ScpB family. As to quaternary structure, homodimer. Homodimerization may be required to stabilize the binding of ScpA to the Smc head domains. Component of a cohesin-like complex composed of ScpA, ScpB and the Smc homodimer, in which ScpA and ScpB bind to the head domain of Smc. The presence of the three proteins is required for the association of the complex with DNA.

The protein localises to the cytoplasm. Functionally, participates in chromosomal partition during cell division. May act via the formation of a condensin-like complex containing Smc and ScpA that pull DNA away from mid-cell into both cell halves. The protein is Segregation and condensation protein B of Lactobacillus delbrueckii subsp. bulgaricus (strain ATCC 11842 / DSM 20081 / BCRC 10696 / JCM 1002 / NBRC 13953 / NCIMB 11778 / NCTC 12712 / WDCM 00102 / Lb 14).